We begin with the raw amino-acid sequence, 389 residues long: Formate-dependent phosphoribosylglycinamide formyltransferase (389 aa).

Residues 15–16 (EL) and Glu-75 each bind N(1)-(5-phospho-beta-D-ribosyl)glycinamide. ATP-binding positions include Arg-107, Lys-148, 153-158 (SSGKGQ), 188-191 (EEFL), and Glu-196. The ATP-grasp domain maps to 112–302 (NLAAGELGLR…EFDLHLRAVL (191 aa)). Mg(2+) is bound by residues Glu-261 and Glu-273. Residues Asp-280, Lys-350, and 357 to 358 (RR) each bind N(1)-(5-phospho-beta-D-ribosyl)glycinamide.

It belongs to the PurK/PurT family. As to quaternary structure, homodimer.

It catalyses the reaction N(1)-(5-phospho-beta-D-ribosyl)glycinamide + formate + ATP = N(2)-formyl-N(1)-(5-phospho-beta-D-ribosyl)glycinamide + ADP + phosphate + H(+). Its pathway is purine metabolism; IMP biosynthesis via de novo pathway; N(2)-formyl-N(1)-(5-phospho-D-ribosyl)glycinamide from N(1)-(5-phospho-D-ribosyl)glycinamide (formate route): step 1/1. Involved in the de novo purine biosynthesis. Catalyzes the transfer of formate to 5-phospho-ribosyl-glycinamide (GAR), producing 5-phospho-ribosyl-N-formylglycinamide (FGAR). Formate is provided by PurU via hydrolysis of 10-formyl-tetrahydrofolate. This is Formate-dependent phosphoribosylglycinamide formyltransferase from Synechococcus sp. (strain CC9311).